Reading from the N-terminus, the 673-residue chain is UvrABC system protein B (673 aa).

The region spanning 29-188 (EGLNDGLAHQ…LAELQYTRND (160 aa)) is the Helicase ATP-binding domain. Residue 42-49 (GVTGSGKT) coordinates ATP. Residues 95 to 118 (YYDYYQPEAYVPSSDTFIEKDASI) carry the Beta-hairpin motif. Positions 434-600 (QVDDVLSEIH…ALNKKVGELL (167 aa)) constitute a Helicase C-terminal domain. Positions 607–632 (KPKRGKQAVKVEEKSANTYKPKSRKE) are disordered. Positions 634–669 (EKELKQLEQQMRDFAKDLEFEKAAAVRDKIGQLKAV) constitute a UVR domain.

The protein belongs to the UvrB family. As to quaternary structure, forms a heterotetramer with UvrA during the search for lesions. Interacts with UvrC in an incision complex.

It is found in the cytoplasm. In terms of biological role, the UvrABC repair system catalyzes the recognition and processing of DNA lesions. A damage recognition complex composed of 2 UvrA and 2 UvrB subunits scans DNA for abnormalities. Upon binding of the UvrA(2)B(2) complex to a putative damaged site, the DNA wraps around one UvrB monomer. DNA wrap is dependent on ATP binding by UvrB and probably causes local melting of the DNA helix, facilitating insertion of UvrB beta-hairpin between the DNA strands. Then UvrB probes one DNA strand for the presence of a lesion. If a lesion is found the UvrA subunits dissociate and the UvrB-DNA preincision complex is formed. This complex is subsequently bound by UvrC and the second UvrB is released. If no lesion is found, the DNA wraps around the other UvrB subunit that will check the other stand for damage. The sequence is that of UvrABC system protein B from Actinobacillus pleuropneumoniae serotype 5b (strain L20).